Reading from the N-terminus, the 245-residue chain is Zinc finger protein AZF1 (245 aa).

Over residues 1–15 the composition is skewed to polar residues; that stretch reads MALETLNSPTATTTA. 2 disordered regions span residues 1–57 and 112–141; these read MALE…NKNL and LGGH…SHSN. A C2H2-type 1 zinc finger spans residues 97-119; sequence YKCTVCGKSFSSYQALGGHKTSH. Over residues 123–134 the composition is skewed to polar residues; that stretch reads TNTSITSGNQEL. The C2H2-type 2 zinc-finger motif lies at 164–186; the sequence is HTCSICFKSFASGQALGGHKRCH. A disordered region spans residues 193-231; sequence GNGNGSSSNSVELVAGSDVSDVDNERWSEESAIGGHRGF.

As to expression, highly expressed in roots and at lower levels in leaves and stems.

It is found in the nucleus. Its function is as follows. Transcriptional repressor involved in the inhibition of plant growth under abiotic stress conditions. Can repress the expression of various genes, including osmotic stress and abscisic acid-repressive genes and auxin-inducible genes, by binding to their promoter regions in a DNA sequence-specific manner. The polypeptide is Zinc finger protein AZF1 (AZF1) (Arabidopsis thaliana (Mouse-ear cress)).